Consider the following 420-residue polypeptide: Tyrosine--tRNA ligase (420 aa).

Tyr-33 contacts L-tyrosine. The short motif at Pro-38–His-47 is the 'HIGH' region element. Positions 168 and 172 each coordinate L-tyrosine. Positions Lys-231–Thr-235 match the 'KMSKS' region motif. Lys-234 provides a ligand contact to ATP. The S4 RNA-binding domain maps to Met-353–Leu-419.

Belongs to the class-I aminoacyl-tRNA synthetase family. TyrS type 1 subfamily. Homodimer.

Its subcellular location is the cytoplasm. It catalyses the reaction tRNA(Tyr) + L-tyrosine + ATP = L-tyrosyl-tRNA(Tyr) + AMP + diphosphate + H(+). Its function is as follows. Catalyzes the attachment of tyrosine to tRNA(Tyr) in a two-step reaction: tyrosine is first activated by ATP to form Tyr-AMP and then transferred to the acceptor end of tRNA(Tyr). In Desulfitobacterium hafniense (strain DSM 10664 / DCB-2), this protein is Tyrosine--tRNA ligase.